The following is a 399-amino-acid chain: Formate-dependent phosphoribosylglycinamide formyltransferase (399 aa).

N(1)-(5-phospho-beta-D-ribosyl)glycinamide-binding positions include 8 to 9 and Glu-68; that span reads EL. ATP is bound by residues Arg-100, Lys-141, 146-151, 185-188, and Glu-193; these read SSGHGQ and EALA. Residues 105–308 form the ATP-grasp domain; the sequence is VLAHEELGLP…EFALHARAIL (204 aa). Residues Glu-266 and Glu-279 each contribute to the Mg(2+) site. Residues Asp-286, Lys-361, and 368–369 each bind N(1)-(5-phospho-beta-D-ribosyl)glycinamide; that span reads RR.

It belongs to the PurK/PurT family. In terms of assembly, homodimer.

It carries out the reaction N(1)-(5-phospho-beta-D-ribosyl)glycinamide + formate + ATP = N(2)-formyl-N(1)-(5-phospho-beta-D-ribosyl)glycinamide + ADP + phosphate + H(+). It participates in purine metabolism; IMP biosynthesis via de novo pathway; N(2)-formyl-N(1)-(5-phospho-D-ribosyl)glycinamide from N(1)-(5-phospho-D-ribosyl)glycinamide (formate route): step 1/1. In terms of biological role, involved in the de novo purine biosynthesis. Catalyzes the transfer of formate to 5-phospho-ribosyl-glycinamide (GAR), producing 5-phospho-ribosyl-N-formylglycinamide (FGAR). Formate is provided by PurU via hydrolysis of 10-formyl-tetrahydrofolate. This Bifidobacterium longum (strain NCC 2705) protein is Formate-dependent phosphoribosylglycinamide formyltransferase.